The following is a 769-amino-acid chain: MSIATSLGFPRIGRRRELKSALEAHWAGELSEAGLQEAARLLRAESHSLQQGLGIGHIPSNDFALYDHVLDTACMVGAIPPGYGWRGGEVTLPTYFALARGTGGGDAAAGLPALEMTKWFDTNYHYLVPRLAAGQHFAVTANRPLALFREALARHRRTRPVLLGPVSFLLLAKTDDGSDPLDLLDRLLPCYAQVLAELAAEGCAWVQMDEPVLALDLAPKARAALRHAYETLARGATPRLLLASYFAPIADNLPTALALPVAGLHLDLVRGRDDLAPVLAAIGPATWLSLGLVDGRNVWRADLRAALATAREAARALGGSERLMIAPSCSLLHVPVDLAQEDRLDPAIRPWLAFATQKLAEVATIARGLDEGEGAIAEALEASDAALRTRRDSARVHRTDVAARLLGATPEMERRPAPHAARRARQRQRLPLPAFPTTTIGSLPQTSGVRRTRAALARGEIGAAEYDEAIATWTEDAIRLQERIGLDVLVHGEFERNDMVKYFGEQLDGFAFTRHGWVQSYGSRCVAPPIIWGDVARPRPMTVRWARHAQSLTARPVKGMLTGPVTMLQWSFVRDDLPRETVCRQIALALRDEVADLEAAGLAIIQVDEPAFREGLPLRTADREAYLRWAVSCFRLATAVVRDDTAIHTHMCYAEFQDIMPAIATMDADAISIETARSRMELLEAFAGHGPSAYPAEIGPGVWDIHSPRIPPEEEILALLRLARRKLADDQLWVNPDCGLKTRNWREVIPALENLVGAARRLRAEAIPA.

5-methyltetrahydropteroyltri-L-glutamate contacts are provided by residues 16–19 and Lys118; that span reads RELK. L-homocysteine is bound by residues 440–442 and Glu493; that span reads IGS. L-methionine contacts are provided by residues 440–442 and Glu493; that span reads IGS. 5-methyltetrahydropteroyltri-L-glutamate is bound by residues 524 to 525 and Trp570; that span reads RC. Asp608 is a binding site for L-homocysteine. Asp608 contributes to the L-methionine binding site. Glu614 is a binding site for 5-methyltetrahydropteroyltri-L-glutamate. The Zn(2+) site is built by His650, Cys652, and Glu674. His706 functions as the Proton donor in the catalytic mechanism. Cys738 lines the Zn(2+) pocket.

It belongs to the vitamin-B12 independent methionine synthase family. Requires Zn(2+) as cofactor.

It catalyses the reaction 5-methyltetrahydropteroyltri-L-glutamate + L-homocysteine = tetrahydropteroyltri-L-glutamate + L-methionine. Its pathway is amino-acid biosynthesis; L-methionine biosynthesis via de novo pathway; L-methionine from L-homocysteine (MetE route): step 1/1. Functionally, catalyzes the transfer of a methyl group from 5-methyltetrahydrofolate to homocysteine resulting in methionine formation. The chain is 5-methyltetrahydropteroyltriglutamate--homocysteine methyltransferase from Acidiphilium cryptum (strain JF-5).